Here is a 323-residue protein sequence, read N- to C-terminus: Sphingolipid delta(4)-desaturase DES1 (323 aa).

Gly2 carries the N-myristoyl glycine lipid modification. The next 2 helical transmembrane spans lie at 41–61 and 68–88; these read PNLIWIIIMMVLTQLAAFYIV and WVIFGAYAFGSCINHSMTLGI. The short motif at 89-93 is the Histidine box-1 element; sequence HEIAH. A helical membrane pass occupies residues 107–127; it reads WFGMFANLPIGIPYSVSFKSY. A Histidine box-2 motif is present at residues 128 to 132; that stretch reads HMDHH. 3 consecutive transmembrane segments (helical) span residues 152–172, 184–204, and 209–229; these read FFCTAFRKFIWVILQPLFYAF, YLEVINTVAQVTFDILIYYFL, and LVYMLAASLLGLGLHPISGHF. A Histidine box-3 motif is present at residues 259 to 263; it reads HNEHH. Ser307 is subject to Phosphoserine.

Belongs to the fatty acid desaturase type 1 family. DEGS subfamily. As to quaternary structure, interacts with RLBP1; the interaction increases synthesis of chromophore-precursors by DEGS1. Post-translationally, myristoylation can target the enzyme to the mitochondria leading to an increase in ceramide levels.

It localises to the mitochondrion membrane. The protein resides in the endoplasmic reticulum membrane. It carries out the reaction an N-acylsphinganine + 2 Fe(II)-[cytochrome b5] + O2 + 2 H(+) = an N-acylsphing-4-enine + 2 Fe(III)-[cytochrome b5] + 2 H2O. The enzyme catalyses all-trans-retinol = 11-cis-retinol. The catalysed reaction is all-trans-retinol = 9-cis-retinol. It catalyses the reaction all-trans-retinol = 13-cis-retinol. It carries out the reaction 11-cis-retinol = 13-cis-retinol. The enzyme catalyses 11-cis-retinol = 9-cis-retinol. Its function is as follows. Has sphingolipid-delta-4-desaturase activity. Converts D-erythro-sphinganine to D-erythro-sphingosine (E-sphing-4-enine). Catalyzes the equilibrium isomerization of retinols. This chain is Sphingolipid delta(4)-desaturase DES1 (DEGS1), found in Pongo abelii (Sumatran orangutan).